The sequence spans 802 residues: MSELDRFSNDKNEMPKIPDVLPLLPVRDIILYPAMVLPLAVGREKSIKALEESMSTNRLVFIVTQKNIQIEDPTPKDVYNIGTICEVLQMLKMPDGTLKALVEGISRAQWTDFKLSDKGYIEVGLKVFDENTLKMPEVEAIMRQTIALFEQYVKLNPRIPIDISVSVSNIADPARLADTIASHLVIKNNDKQTILELVDPVKRLEKIIQILNAEIEILNIERRIQNRVRNQIEKTQKEYYLTEQMKAIQKELKQKDEAQKDLDDLKGKLKKTKMPQAAKSAADKEMSRLEKMMPMSPEATVIRTYLEWILDLPWEKSTIDNLDLNRAKEVLDQDHYGLEKVKDRVLEYLAVLSRVQKIKGPILCFIGPPGVGKTSIAKSVARSLGRNFVRISMGGVKDEAEIRGHRRTYIGSMPGKIIQSIKKAGSNNPVFILDEIDKIGSDWRGDPSSALLEVLDPEQNYTFNDHYLDVDFDLSNVMFITTANTLNNIPVTLFDRLELIRFSSYTDVEKRHIAEDFIVPKQLKEHGLKPEEFIFDDGALDIVIKNYTHEAGVRNLTREIANLCRKVVKGLEFNKELKSITIKPENLNKYLGIAYYERERIAENDVGVATGLAWTEVGGETLTIEVNKMGGKNSLVLTGKLGDVMKESAQAALTYVRSSSQKLKIDENMFSNTDFHVHVPEGAVPKDGPSAGIALATALASVCMNKPIKKKIAMTGEVTLRGRVLSIGGLKEKVLAAYREGITMILFPESNKKDLVDIPEDVIKKLQMIPVSHMDEVISLTIERLPENKNIKMDKRNGENGI.

The region spanning 21 to 215 is the Lon N-terminal domain; that stretch reads LPLLPVRDII…KIIQILNAEI (195 aa). Position 367–374 (367–374) interacts with ATP; that stretch reads GPPGVGKT. In terms of domain architecture, Lon proteolytic spans 603–784; it reads ENDVGVATGL…DEVISLTIER (182 aa). Active-site residues include serine 690 and lysine 733.

This sequence belongs to the peptidase S16 family. As to quaternary structure, homohexamer. Organized in a ring with a central cavity.

The protein localises to the cytoplasm. The enzyme catalyses Hydrolysis of proteins in presence of ATP.. Functionally, ATP-dependent serine protease that mediates the selective degradation of mutant and abnormal proteins as well as certain short-lived regulatory proteins. Required for cellular homeostasis and for survival from DNA damage and developmental changes induced by stress. Degrades polypeptides processively to yield small peptide fragments that are 5 to 10 amino acids long. Binds to DNA in a double-stranded, site-specific manner. The sequence is that of Lon protease from Endomicrobium trichonymphae.